The sequence spans 442 residues: Cell division protein FtsA (442 aa).

Belongs to the FtsA/MreB family. As to quaternary structure, self-interacts. Interacts with FtsZ.

The protein localises to the cell inner membrane. Functionally, cell division protein that is involved in the assembly of the Z ring. May serve as a membrane anchor for the Z ring. In Rhizobium meliloti (strain 1021) (Ensifer meliloti), this protein is Cell division protein FtsA.